The following is a 100-amino-acid chain: Apolipoprotein C-II (100 aa).

The N-terminal stretch at 1-22 is a signal peptide; sequence MGSRFLLALFLILLVLGCEVQA. The segment at 66–74 is lipid binding; sequence SVDEKLRDM. Positions 78-100 are lipoprotein lipase cofactor; sequence SSAAMTTYASIFTDQILTLLKGE.

This sequence belongs to the apolipoprotein C2 family. In terms of processing, proapolipoprotein C-II is synthesized as a sialic acid containing glycoprotein which is subsequently desialylated prior to its proteolytic processing. Post-translationally, proapolipoprotein C-II, the major form found in plasma undergoes proteolytic cleavage of its N-terminal hexapeptide to generate the mature form apolipoprotein C-II, which occurs as the minor form in plasma.

The protein localises to the secreted. In terms of biological role, component of chylomicrons, very low-density lipoproteins (VLDL), low-density lipoproteins (LDL), and high-density lipoproteins (HDL) in plasma. Plays an important role in lipoprotein metabolism as an activator of lipoprotein lipase. The protein is Apolipoprotein C-II (APOC2) of Microtus ochrogaster (Prairie vole).